A 193-amino-acid chain; its full sequence is Iron-sulfur flavoprotein MJ1083 (193 aa).

4 residues coordinate [4Fe-4S] cluster: C47, C50, C53, and C59.

This sequence belongs to the SsuE family. Isf subfamily. In terms of assembly, homodimer. FMN is required as a cofactor. Requires [4Fe-4S] cluster as cofactor.

Redox-active protein probably involved in electron transport. The sequence is that of Iron-sulfur flavoprotein MJ1083 from Methanocaldococcus jannaschii (strain ATCC 43067 / DSM 2661 / JAL-1 / JCM 10045 / NBRC 100440) (Methanococcus jannaschii).